The primary structure comprises 453 residues: Cobyrinate a,c-diamide synthase (453 aa).

In terms of domain architecture, GATase cobBQ-type spans 250–440 (RIAVPFDEAF…IHTHTACLPD (191 aa)). The active-site Nucleophile is Cys332.

It belongs to the CobB/CbiA family. Mg(2+) is required as a cofactor.

The enzyme catalyses cob(II)yrinate + 2 L-glutamine + 2 ATP + 2 H2O = cob(II)yrinate a,c diamide + 2 L-glutamate + 2 ADP + 2 phosphate + 2 H(+). The catalysed reaction is Ni-sirohydrochlorin + 2 L-glutamine + 2 ATP + 2 H2O = Ni-sirohydrochlorin a,c-diamide + 2 L-glutamate + 2 ADP + 2 phosphate + 2 H(+). It functions in the pathway cofactor biosynthesis; adenosylcobalamin biosynthesis; cob(II)yrinate a,c-diamide from sirohydrochlorin (anaerobic route): step 10/10. Functionally, catalyzes the ATP-dependent amidation of the two carboxylate groups at positions a and c of cobyrinate, using either L-glutamine or ammonia as the nitrogen source. Involved in the biosynthesis of the unique nickel-containing tetrapyrrole coenzyme F430, the prosthetic group of methyl-coenzyme M reductase (MCR), which plays a key role in methanogenesis and anaerobic methane oxidation. Catalyzes the ATP-dependent amidation of the two carboxylate groups at positions a and c of Ni-sirohydrochlorin, using L-glutamine or ammonia as the nitrogen source. This is Cobyrinate a,c-diamide synthase from Methanosphaera stadtmanae (strain ATCC 43021 / DSM 3091 / JCM 11832 / MCB-3).